Consider the following 270-residue polypeptide: tRNA pseudouridine synthase B (270 aa).

The active-site Nucleophile is the Asp-49.

Belongs to the pseudouridine synthase TruB family. Type 1 subfamily.

The catalysed reaction is uridine(55) in tRNA = pseudouridine(55) in tRNA. In terms of biological role, responsible for synthesis of pseudouridine from uracil-55 in the psi GC loop of transfer RNAs. The protein is tRNA pseudouridine synthase B of Bartonella quintana (strain Toulouse) (Rochalimaea quintana).